The following is a 399-amino-acid chain: Acetate kinase (399 aa).

Asparagine 8 lines the Mg(2+) pocket. Lysine 15 lines the ATP pocket. A substrate-binding site is contributed by arginine 89. The active-site Proton donor/acceptor is the aspartate 147. ATP-binding positions include 207 to 211 (HMGNG), 284 to 286 (DMR), and 332 to 336 (GIGEN). Residue glutamate 385 participates in Mg(2+) binding.

This sequence belongs to the acetokinase family. In terms of assembly, homodimer. It depends on Mg(2+) as a cofactor. Mn(2+) serves as cofactor.

It is found in the cytoplasm. It catalyses the reaction acetate + ATP = acetyl phosphate + ADP. It participates in metabolic intermediate biosynthesis; acetyl-CoA biosynthesis; acetyl-CoA from acetate: step 1/2. Its function is as follows. Catalyzes the formation of acetyl phosphate from acetate and ATP. Can also catalyze the reverse reaction. The sequence is that of Acetate kinase from Streptococcus mutans serotype c (strain ATCC 700610 / UA159).